The following is a 565-amino-acid chain: Methionine--tRNA ligase (565 aa).

A 'HIGH' region motif is present at residues Pro-16–Asn-26. Zn(2+) contacts are provided by Cys-148, Cys-151, Cys-161, and Cys-164. A 'KMSKS' region motif is present at residues Lys-338–Ser-342. Lys-341 provides a ligand contact to ATP.

Belongs to the class-I aminoacyl-tRNA synthetase family. MetG type 1 subfamily. It depends on Zn(2+) as a cofactor.

The protein localises to the cytoplasm. It carries out the reaction tRNA(Met) + L-methionine + ATP = L-methionyl-tRNA(Met) + AMP + diphosphate. In terms of biological role, is required not only for elongation of protein synthesis but also for the initiation of all mRNA translation through initiator tRNA(fMet) aminoacylation. This is Methionine--tRNA ligase from Thermofilum pendens (strain DSM 2475 / Hrk 5).